Consider the following 212-residue polypeptide: Ras-related protein Rab-2A (212 aa).

Position 2 is an N-acetylalanine (Ala2). The segment at 2–19 is required for interaction with PRKCI; it reads AYAYLFKYIIIGDTGVGK. GTP is bound by residues Gly16, Val17, Gly18, Lys19, Ser20, Cys21, and Thr38. A Mg(2+)-binding site is contributed by Ser20. The Switch 1 signature appears at 37–42; the sequence is LTIGVE. Residues Thr38 and Asp61 each coordinate Mg(2+). A Switch 2 motif is present at residues 63-72; it reads AGQESFRSIT. 6 residues coordinate GTP: Gly64, Asn119, Lys120, Asp122, Ala150, and Lys151. Residues Cys211 and Cys212 are each lipidated (S-geranylgeranyl cysteine).

Belongs to the small GTPase superfamily. Rab family. Interacts with PRKCI. Interacts with TRIP11. Interacts (in GTP-bound form) with GARIN1B. Interacts (GTP-bound) with HOPS complex component VPS39; interaction contributes to obtaining a functional HOPS complex that promotes autophagosome-lysosome membrane fusion driven by STX17-SNAP29-VAMP8. May interact with VPS41. Mg(2+) is required as a cofactor. Post-translationally, prenylated. Prenylation is required for association with cellular membranes.

It localises to the endoplasmic reticulum-Golgi intermediate compartment membrane. Its subcellular location is the melanosome. It is found in the endoplasmic reticulum membrane. The protein resides in the golgi apparatus membrane. The protein localises to the cytoplasmic vesicle. It localises to the secretory vesicle. Its subcellular location is the acrosome. It is found in the autophagosome membrane. The catalysed reaction is GTP + H2O = GDP + phosphate + H(+). With respect to regulation, regulated by guanine nucleotide exchange factors (GEFs) which promote the exchange of bound GDP for free GTP, GTPase activating proteins (GAPs) which increase the GTP hydrolysis activity, and GDP dissociation inhibitors (GDIs) which inhibit the dissociation of the nucleotide from the GTPase. The small GTPases Rab are key regulators of intracellular membrane trafficking, from the formation of transport vesicles to their fusion with membranes. Rabs cycle between active GTP-bound and inactive GDP-bound states. In their active state, drive transport of vesicular carriers from donor organelles to acceptor organelles to regulate the membrane traffic that maintains organelle identity and morphology. RAB2A regulates autophagy by promoting autophagosome-lysosome fusion via recruitment of the HOPS endosomal tethering complex; this process involves autophagosomal RAB2A and lysosomal RAB39A recruitment of HOPS subcomplexes VPS39-VPS11 and VPS41-VPS16-VPS18-VPS33A, respectively, which assemble into a functional complex to mediate membrane tethering and SNAREs-driven membrane fusion. Required for protein transport from the endoplasmic reticulum to the Golgi complex. Regulates the compacted morphology of the Golgi. Together with RAB2B, redundantly required for efficient autophagic flux. This Canis lupus familiaris (Dog) protein is Ras-related protein Rab-2A (RAB2A).